Here is a 353-residue protein sequence, read N- to C-terminus: Anthranilate phosphoribosyltransferase (353 aa).

Residues glycine 79, 82-83, threonine 87, 89-92, 107-115, and serine 119 contribute to the 5-phospho-alpha-D-ribose 1-diphosphate site; these read GD, NIST, and KHGNHSFTS. Glycine 79 contributes to the anthranilate binding site. A Mg(2+)-binding site is contributed by serine 91. Asparagine 110 is a binding site for anthranilate. Arginine 165 contacts anthranilate. Aspartate 223 and glutamate 224 together coordinate Mg(2+).

This sequence belongs to the anthranilate phosphoribosyltransferase family. As to quaternary structure, homodimer. Requires Mg(2+) as cofactor.

It carries out the reaction N-(5-phospho-beta-D-ribosyl)anthranilate + diphosphate = 5-phospho-alpha-D-ribose 1-diphosphate + anthranilate. It participates in amino-acid biosynthesis; L-tryptophan biosynthesis; L-tryptophan from chorismate: step 2/5. Functionally, catalyzes the transfer of the phosphoribosyl group of 5-phosphorylribose-1-pyrophosphate (PRPP) to anthranilate to yield N-(5'-phosphoribosyl)-anthranilate (PRA). This chain is Anthranilate phosphoribosyltransferase, found in Methanococcoides burtonii (strain DSM 6242 / NBRC 107633 / OCM 468 / ACE-M).